The primary structure comprises 30 residues: Photosystem I reaction center subunit XII (30 aa).

Residues L7–D29 traverse the membrane as a helical segment.

The protein belongs to the PsaM family.

The protein localises to the plastid. Its subcellular location is the chloroplast thylakoid membrane. This is Photosystem I reaction center subunit XII from Pinus thunbergii (Japanese black pine).